We begin with the raw amino-acid sequence, 442 residues long: tRNA-2-methylthio-N(6)-dimethylallyladenosine synthase (442 aa).

The MTTase N-terminal domain maps to 5-122; that stretch reads KRIFIKTFGC…LPDMIESKRR (118 aa). Residues cysteine 14, cysteine 51, cysteine 85, cysteine 159, cysteine 163, and cysteine 166 each contribute to the [4Fe-4S] cluster site. In terms of domain architecture, Radical SAM core spans 145 to 377; sequence RVEGAAAFLS…QALNEAQGKA (233 aa). The 63-residue stretch at 380–442 folds into the TRAM domain; it reads ASMVGSIQRV…LSHTLRGELV (63 aa).

This sequence belongs to the methylthiotransferase family. MiaB subfamily. As to quaternary structure, monomer. Requires [4Fe-4S] cluster as cofactor.

It localises to the cytoplasm. The catalysed reaction is N(6)-dimethylallyladenosine(37) in tRNA + (sulfur carrier)-SH + AH2 + 2 S-adenosyl-L-methionine = 2-methylsulfanyl-N(6)-dimethylallyladenosine(37) in tRNA + (sulfur carrier)-H + 5'-deoxyadenosine + L-methionine + A + S-adenosyl-L-homocysteine + 2 H(+). Catalyzes the methylthiolation of N6-(dimethylallyl)adenosine (i(6)A), leading to the formation of 2-methylthio-N6-(dimethylallyl)adenosine (ms(2)i(6)A) at position 37 in tRNAs that read codons beginning with uridine. The sequence is that of tRNA-2-methylthio-N(6)-dimethylallyladenosine synthase from Methylobacillus flagellatus (strain ATCC 51484 / DSM 6875 / VKM B-1610 / KT).